A 559-amino-acid chain; its full sequence is Urocanate hydratase (559 aa).

NAD(+)-binding positions include Gly-53–Gly-54, Gln-131, Gly-177–Gly-179, Glu-197, Arg-202, Asn-243–Ala-244, Gln-264–His-268, Tyr-274–Leu-275, and Tyr-323. Cys-411 is an active-site residue. Gly-493 contacts NAD(+).

Belongs to the urocanase family. NAD(+) serves as cofactor.

Its subcellular location is the cytoplasm. The catalysed reaction is 4-imidazolone-5-propanoate = trans-urocanate + H2O. It participates in amino-acid degradation; L-histidine degradation into L-glutamate; N-formimidoyl-L-glutamate from L-histidine: step 2/3. In terms of biological role, catalyzes the conversion of urocanate to 4-imidazolone-5-propionate. The sequence is that of Urocanate hydratase from Pseudomonas aeruginosa (strain ATCC 15692 / DSM 22644 / CIP 104116 / JCM 14847 / LMG 12228 / 1C / PRS 101 / PAO1).